We begin with the raw amino-acid sequence, 400 residues long: Lipase member N (400 aa).

The signal sequence occupies residues M1–S19. The region spanning P81–G381 is the AB hydrolase-1 domain. The active-site Nucleophile is S175. C249 and C258 form a disulfide bridge. N-linked (GlcNAc...) asparagine glycosylation occurs at N274. Catalysis depends on charge relay system residues D346 and H375.

It belongs to the AB hydrolase superfamily. Lipase family. Highly expressed in the epidermis. Also detected in other tissues, although at much lower levels, including liver and kidney.

It localises to the secreted. The enzyme catalyses a sterol ester + H2O = a sterol + a fatty acid + H(+). It carries out the reaction a triacylglycerol + H2O = a 1,2-diacylglycerol + a fatty acid + H(+). The catalysed reaction is a triacylglycerol + H2O = a diacylglycerol + a fatty acid + H(+). It catalyses the reaction a cholesterol ester + H2O = cholesterol + a fatty acid + H(+). In terms of biological role, plays a highly specific role in the last step of keratinocyte differentiation. Contains two distinct domains: the alpha/beta hydrolase fold and the abhydrolase-associated lipase region, also features the consensus sequence of the active site of a genuine lipase. May have an essential function in lipid metabolism of the most differentiated epidermal layers. In Mus musculus (Mouse), this protein is Lipase member N (Lipn).